The sequence spans 283 residues: Nucleotide-binding protein Hore_15880 (283 aa).

8 to 15 lines the ATP pocket; the sequence is GMSGAGKS. 57 to 60 is a binding site for GTP; sequence DIRG.

Belongs to the RapZ-like family.

Its function is as follows. Displays ATPase and GTPase activities. This Halothermothrix orenii (strain H 168 / OCM 544 / DSM 9562) protein is Nucleotide-binding protein Hore_15880.